Reading from the N-terminus, the 260-residue chain is BTB/POZ domain-containing protein KCTD21 (260 aa).

One can recognise a BTB domain in the interval D3 to E72. Residues Q88–L112 adopt a coiled-coil conformation.

Homopentamer. Interacts with KCTD11; KCTD21 and KCTD11 may associate in pentameric assemblies. Interacts (via BTB domain) with CUL3; indicative for a participation in a BCR (BTB-CUL3-RBX1) E3 ubiquitin-protein ligase complex. Highly expressed in cerebellum and brain. Expressed in adult cerebellum (at protein level).

The protein operates within protein modification; protein ubiquitination. Functionally, probable substrate-specific adapter of a BCR (BTB-CUL3-RBX1) E3 ubiquitin-protein ligase complex mediating the ubiquitination and subsequent proteasomal degradation of target proteins. Promotes the ubiquitination of HDAC1. Can function as antagonist of the Hedgehog pathway by affecting the nuclear transfer of transcription factor GLI1; the function probably occurs via HDAC1 down-regulation, keeping GLI1 acetylated and inactive. Inhibits cell growth and tumorigenicity of medulloblastoma (MDB). The chain is BTB/POZ domain-containing protein KCTD21 (Kctd21) from Mus musculus (Mouse).